Here is a 117-residue protein sequence, read N- to C-terminus: Prefoldin subunit beta (117 aa).

Belongs to the prefoldin subunit beta family. Heterohexamer of two alpha and four beta subunits.

The protein localises to the cytoplasm. Functionally, molecular chaperone capable of stabilizing a range of proteins. Seems to fulfill an ATP-independent, HSP70-like function in archaeal de novo protein folding. The protein is Prefoldin subunit beta of Thermococcus gammatolerans (strain DSM 15229 / JCM 11827 / EJ3).